The chain runs to 200 residues: Imidazoleglycerol-phosphate dehydratase (200 aa).

The protein belongs to the imidazoleglycerol-phosphate dehydratase family.

It localises to the cytoplasm. The catalysed reaction is D-erythro-1-(imidazol-4-yl)glycerol 3-phosphate = 3-(imidazol-4-yl)-2-oxopropyl phosphate + H2O. It participates in amino-acid biosynthesis; L-histidine biosynthesis; L-histidine from 5-phospho-alpha-D-ribose 1-diphosphate: step 6/9. This is Imidazoleglycerol-phosphate dehydratase from Chlorobium limicola (strain DSM 245 / NBRC 103803 / 6330).